A 346-amino-acid polypeptide reads, in one-letter code: Calcium homeostasis modulator protein 1 (346 aa).

Residues 1 to 21 lie on the Cytoplasmic side of the membrane; sequence MMDKFRMIFQFLQSNQESFMN. The tract at residues 10–37 is central pore; sequence QFLQSNQESFMNGICGIMALASAQMYSA. The chain crosses the membrane as a helical span at residues 22–37; the sequence is GICGIMALASAQMYSA. Topologically, residues 38–49 are extracellular; it reads FDFNCPCLPGYN. 2 cysteine pairs are disulfide-bonded: Cys-42/Cys-127 and Cys-44/Cys-161. A helical membrane pass occupies residues 50–72; that stretch reads AAYSAGILLAPPLVLFLLGLVMN. Residues 63–70 form a phospholipid-binding region; the sequence is VLFLLGLV. The Cytoplasmic portion of the chain corresponds to 73 to 99; the sequence is NNVSMLAEEWKRPLGRRAKDPAVLRYM. A helical transmembrane segment spans residues 100-125; it reads FCSMAQRALIAPVVWVAVTLLDGKCF. The S-palmitoyl cysteine moiety is linked to residue Cys-101. Residues 105–117 are phospholipid-binding; it reads QRALIAPVVWVAV. The Extracellular portion of the chain corresponds to 126-180; it reads LCAFCTAVPVSALGNGSLAPGLPAPELARLLARVPCPEIYDGDWLLAREVAVRYL. N-linked (GlcNAc...) asparagine glycosylation is present at Asn-140. A helical transmembrane segment spans residues 181-206; that stretch reads RCISQALGWSFVLLTTLLAFVVRSVR. Residues 192–202 are phospholipid-binding; the sequence is VLLTTLLAFVV. Topologically, residues 207–346 are cytoplasmic; sequence PCFTQAAFLK…KEVATYFSKV (140 aa). Residue Cys-208 is the site of S-palmitoyl cysteine attachment. A disordered region spans residues 313–346; that stretch reads LRLGQEEPPLMGNGWAGGGPRPPRKEVATYFSKV.

This sequence belongs to the CALHM family. Oligomerizes to form hexamers and octamers. Does not form gap junctions. Associates with CALHM3 as a pore-forming subunit in a hetero-hexameric channel complex. Post-translationally, N-glycosylated. Assembly with CALHM3 is associated with N-glycan remodeling and formation of hybrid complex- and high mannose-type glycochains. This N-glycan processing regulates channel trafficking and gating kinetics. In terms of processing, palmitoylated by ZDHHC3, ZDHHC20 and possibly ZDHHC7. Palmitoylation regulates voltage-dependent gating of the channel by shifting it toward more depolarized potentials. Predominantly expressed in adult brain. Detected also in retinoic acid-differentiated SH-SY5Y cells. Specifically expressed in circumvallate taste bud cells.

It localises to the cell membrane. The protein resides in the endoplasmic reticulum membrane. It is found in the basolateral cell membrane. The enzyme catalyses ATP(in) = ATP(out). It carries out the reaction Ca(2+)(in) = Ca(2+)(out). The catalysed reaction is Mg(2+)(in) = Mg(2+)(out). It catalyses the reaction Na(+)(in) = Na(+)(out). The enzyme catalyses K(+)(in) = K(+)(out). It carries out the reaction Li(+)(in) = Li(+)(out). The catalysed reaction is Rb(+)(in) = Rb(+)(out). It catalyses the reaction Cs(+)(in) = Cs(+)(out). The enzyme catalyses chloride(in) = chloride(out). Regulated by membrane voltage and extracellular Ca(2+). Inhibited by Gd(3+), ruthenium red, and Zn(2+) and partially inhibited by 2-aminoethoxydiphenyl borate. Its function is as follows. Pore-forming subunit of gustatory voltage-gated ion channels required for sensory perception of sweet, bitter and umami tastes. With CALHM3 forms a fast-activating voltage-gated ATP-release channel in type II taste bud cells, ATP acting as a neurotransmitter to activate afferent neural gustatory pathways. Acts both as a voltage-gated and calcium-activated ion channel: mediates neuronal excitability in response to membrane depolarization and low extracellular Ca(2+) concentration. Has poor ion selectivity and forms a wide pore (around 14 Angstroms) that mediates permeation of small ions including Ca(2+), Na(+), K(+) and Cl(-), as well as larger ions such as ATP(4-). Mediates Ca(2+) influx and downstream activation of the ERK1 and ERK2 cascade in neurons. Triggers endoplasmic reticulum stress by reducing the Ca(2+) content of the endoplasmic reticulum. May indirectly control amyloid precursor protein (APP) proteolysis and aggregated amyloid-beta (Abeta) peptides levels in a Ca(2+)-dependent manner. This is Calcium homeostasis modulator protein 1 from Homo sapiens (Human).